Consider the following 305-residue polypeptide: Tyrosine recombinase XerC (305 aa).

Positions 1–84 (MNEVFESYLT…TLRGFYKYAL (84 aa)) constitute a Core-binding (CB) domain. In terms of domain architecture, Tyr recombinase spans 105-299 (KLPVFMFPKQ…TAEQLQNLYK (195 aa)). Active-site residues include arginine 146, lysine 170, histidine 251, arginine 254, and histidine 277. Tyrosine 286 (O-(3'-phospho-DNA)-tyrosine intermediate) is an active-site residue.

The protein belongs to the 'phage' integrase family. XerC subfamily. In terms of assembly, forms a cyclic heterotetrameric complex composed of two molecules of XerC and two molecules of XerD.

It is found in the cytoplasm. Site-specific tyrosine recombinase, which acts by catalyzing the cutting and rejoining of the recombining DNA molecules. The XerC-XerD complex is essential to convert dimers of the bacterial chromosome into monomers to permit their segregation at cell division. It also contributes to the segregational stability of plasmids. This is Tyrosine recombinase XerC from Treponema denticola (strain ATCC 35405 / DSM 14222 / CIP 103919 / JCM 8153 / KCTC 15104).